Reading from the N-terminus, the 547-residue chain is Chaperonin GroEL (547 aa).

Residues 30-33 (TLGP), K51, 87-91 (DGTTT), G415, 479-481 (NAA), and D495 contribute to the ATP site.

Belongs to the chaperonin (HSP60) family. Forms a cylinder of 14 subunits composed of two heptameric rings stacked back-to-back. Interacts with the co-chaperonin GroES.

Its subcellular location is the cytoplasm. The enzyme catalyses ATP + H2O + a folded polypeptide = ADP + phosphate + an unfolded polypeptide.. Its function is as follows. Together with its co-chaperonin GroES, plays an essential role in assisting protein folding. The GroEL-GroES system forms a nano-cage that allows encapsulation of the non-native substrate proteins and provides a physical environment optimized to promote and accelerate protein folding. The chain is Chaperonin GroEL from Cupriavidus necator (strain ATCC 17699 / DSM 428 / KCTC 22496 / NCIMB 10442 / H16 / Stanier 337) (Ralstonia eutropha).